The following is a 400-amino-acid chain: Exodeoxyribonuclease 7 large subunit (400 aa).

It belongs to the XseA family. Heterooligomer composed of large and small subunits.

Its subcellular location is the cytoplasm. It carries out the reaction Exonucleolytic cleavage in either 5'- to 3'- or 3'- to 5'-direction to yield nucleoside 5'-phosphates.. Its function is as follows. Bidirectionally degrades single-stranded DNA into large acid-insoluble oligonucleotides, which are then degraded further into small acid-soluble oligonucleotides. This is Exodeoxyribonuclease 7 large subunit from Clostridium perfringens (strain SM101 / Type A).